The following is a 476-amino-acid chain: MMTAKAVDKIPVTLSGFVHQLSDNIYPVEDLAATSVTIFPNAELGGPFDQMNGVAGDGMINIDMTGEKRSLDLPYPSSFAPVSAPRNQTFTYMGKFSIDPQYPGASCYPEGIINIVSAGILQGVTSPASTTASSSVTSASPNPLATGPLGVCTMSQTQPDLDHLYSPPPPPPPYSGCAGDLYQDPSAFLSAATTSTSSSLAYPPPPSYPSPKPATDPGLFPMIPDYPGFFPSQCQRDLHGTAGPDRKPFPCPLDTLRVPPPLTPLSTIRNFTLGGPSAGVTGPGASGGSEGPRLPGSSSAAAAAAAAAAYNPHHLPLRPILRPRKYPNRPSKTPVHERPYPCPAEGCDRRFSRSDELTRHIRIHTGHKPFQCRICMRNFSRSDHLTTHIRTHTGEKPFACDYCGRKFARSDERKRHTKIHLRQKERKSSAPSASVPAPSTASCSGGVQPGGTLCSSNSSSLGGGPLAPCSSRTRTP.

The span at 127–141 (PASTTASSSVTSASP) shows a compositional bias: low complexity. A disordered region spans residues 127-178 (PASTTASSSVTSASPNPLATGPLGVCTMSQTQPDLDHLYSPPPPPPPYSGCA). The HCFC1-binding-motif (HBM) motif lies at 162–165 (DHLY). Lysine 247 is modified (N6-acetyllysine; by EP300). 2 disordered regions span residues 275 to 300 (GPSA…SSSA) and 318 to 341 (RPIL…RPYP). Over residues 281–290 (TGPGASGGSE) the composition is skewed to gly residues. C2H2-type zinc fingers lie at residues 340–364 (YPCP…IRIH), 370–392 (FQCR…IRTH), and 398–420 (FACD…TKIH). Residues 412–476 (ERKRHTKIHL…APCSSRTRTP (65 aa)) form a disordered region. A compositionally biased stretch (basic residues) spans 415–425 (RHTKIHLRQKE). The span at 429–476 (SAPSASVPAPSTASCSGGVQPGGTLCSSNSSSLGGGPLAPCSSRTRTP) shows a compositional bias: low complexity.

It belongs to the EGR C2H2-type zinc-finger protein family. In terms of assembly, interacts with HCFC1. Interacts with WWP2. Interacts with UBC9. Interacts with CITED1. Interacts (via phosphorylated form) with SFN. Ubiquitinated by WWP2 leading to proteasomal degradation. Post-translationally, acetylated at Lys-247. May be deacetylated by HDAC6, HDAC10 or SIRT1.

The protein resides in the nucleus. It functions in the pathway protein modification; protein sumoylation. Sequence-specific DNA-binding transcription factor. Plays a role in hindbrain segmentation by regulating the expression of a subset of homeobox containing genes and in Schwann cell myelination by regulating the expression of genes involved in the formation and maintenance of myelin. Binds to two EGR2-consensus sites EGR2A (5'-CTGTAGGAG-3') and EGR2B (5'-ATGTAGGTG-3') in the HOXB3 enhancer and promotes HOXB3 transcriptional activation. Binds to specific DNA sites located in the promoter region of HOXA4, HOXB2 and ERBB2. Regulates hindbrain segmentation by controlling the expression of Hox genes, such as HOXA4, HOXB3 and HOXB2, and thereby specifying odd and even rhombomeres. Promotes the expression of HOXB3 in the rhombomere r5 in the hindbrain. Regulates myelination in the peripheral nervous system after birth, possibly by regulating the expression of myelin proteins, such as MPZ, and by promoting the differentiation of Schwann cells. Involved in the development of the jaw openener musculature, probably by playing a role in its innervation through trigeminal motor neurons. May play a role in adipogenesis, possibly by regulating the expression of CEBPB. Functionally, E3 SUMO-protein ligase helping SUMO1 conjugation to its coregulators NAB1 and NAB2, whose sumoylation down-regulates EGR2 transcriptional activity. This is E3 SUMO-protein ligase EGR2 (EGR2) from Homo sapiens (Human).